The chain runs to 159 residues: Ribosome-binding factor A (159 aa).

Basic and acidic residues-rich tracts occupy residues 118 to 128 and 137 to 146; these read AADDEVAKARE and DPYKEPRVAS. Positions 118–159 are disordered; sequence AADDEVAKARENAQPAGDADPYKEPRVASDEDEASPDVREAD.

Belongs to the RbfA family. As to quaternary structure, monomer. Binds 30S ribosomal subunits, but not 50S ribosomal subunits or 70S ribosomes.

The protein resides in the cytoplasm. Functionally, one of several proteins that assist in the late maturation steps of the functional core of the 30S ribosomal subunit. Associates with free 30S ribosomal subunits (but not with 30S subunits that are part of 70S ribosomes or polysomes). Required for efficient processing of 16S rRNA. May interact with the 5'-terminal helix region of 16S rRNA. The sequence is that of Ribosome-binding factor A from Rhodococcus erythropolis (strain PR4 / NBRC 100887).